A 154-amino-acid polypeptide reads, in one-letter code: Large ribosomal subunit protein uL13 (154 aa).

Positions 129–154 (SQHPHEAQQPEALDVGTLNRKNKRIA) are disordered.

Belongs to the universal ribosomal protein uL13 family. In terms of assembly, part of the 50S ribosomal subunit.

In terms of biological role, this protein is one of the early assembly proteins of the 50S ribosomal subunit, although it is not seen to bind rRNA by itself. It is important during the early stages of 50S assembly. This Bartonella bacilliformis (strain ATCC 35685 / KC583 / Herrer 020/F12,63) protein is Large ribosomal subunit protein uL13.